The following is a 227-amino-acid chain: Ribosomal RNA large subunit methyltransferase E (227 aa).

Gly-78, Trp-80, Asp-103, Asp-119, and Asp-143 together coordinate S-adenosyl-L-methionine. The Proton acceptor role is filled by Lys-183.

The protein belongs to the class I-like SAM-binding methyltransferase superfamily. RNA methyltransferase RlmE family.

It localises to the cytoplasm. The catalysed reaction is uridine(2552) in 23S rRNA + S-adenosyl-L-methionine = 2'-O-methyluridine(2552) in 23S rRNA + S-adenosyl-L-homocysteine + H(+). Specifically methylates the uridine in position 2552 of 23S rRNA at the 2'-O position of the ribose in the fully assembled 50S ribosomal subunit. This Rickettsia rickettsii (strain Iowa) protein is Ribosomal RNA large subunit methyltransferase E.